A 359-amino-acid chain; its full sequence is Fructose-bisphosphate aldolase class 2 (359 aa).

A D-glyceraldehyde 3-phosphate-binding site is contributed by S50. Catalysis depends on D83, which acts as the Proton donor. The Zn(2+) site is built by H84, D105, E142, and H198. G199 serves as a coordination point for dihydroxyacetone phosphate. H232 contacts Zn(2+). Dihydroxyacetone phosphate contacts are provided by residues 233–235 and 275–278; these read GSS and NIDT.

It belongs to the class II fructose-bisphosphate aldolase family. The cofactor is Zn(2+).

The enzyme catalyses beta-D-fructose 1,6-bisphosphate = D-glyceraldehyde 3-phosphate + dihydroxyacetone phosphate. It functions in the pathway carbohydrate degradation; glycolysis; D-glyceraldehyde 3-phosphate and glycerone phosphate from D-glucose: step 4/4. Catalyzes the aldol condensation of dihydroxyacetone phosphate (DHAP or glycerone-phosphate) with glyceraldehyde 3-phosphate (G3P) to form fructose 1,6-bisphosphate (FBP) in gluconeogenesis and the reverse reaction in glycolysis. The protein is Fructose-bisphosphate aldolase class 2 (fbaA) of Synechocystis sp. (strain ATCC 27184 / PCC 6803 / Kazusa).